A 250-amino-acid polypeptide reads, in one-letter code: Probable fimbrial chaperone YfcS (250 aa).

The first 28 residues, 1-28 (MSDLLCSAKLGAMTLALLLSATSLSALA), serve as a signal peptide directing secretion.

The protein belongs to the periplasmic pilus chaperone family.

The protein resides in the periplasm. In terms of biological role, part of the yfcOPQRSUV fimbrial operon. Could contribute to adhesion to various surfaces in specific environmental niches. Increases adhesion to eukaryotic T24 bladder epithelial cells in the absence of fim genes. The polypeptide is Probable fimbrial chaperone YfcS (yfcS) (Escherichia coli (strain K12)).